The sequence spans 60 residues: MISQDLINRINELYKKQKESGLTDEEQQEQQKLRQEYLKGIRKQVLKQMGEDPEKEPKNN.

This sequence belongs to the UPF0291 family.

It localises to the cytoplasm. The polypeptide is UPF0291 protein Nther_1806 (Natranaerobius thermophilus (strain ATCC BAA-1301 / DSM 18059 / JW/NM-WN-LF)).